The chain runs to 180 residues: Large ribosomal subunit protein uL5 (180 aa).

It belongs to the universal ribosomal protein uL5 family. Part of the 50S ribosomal subunit; part of the 5S rRNA/L5/L18/L25 subcomplex. Contacts the 5S rRNA and the P site tRNA. Forms a bridge to the 30S subunit in the 70S ribosome.

This is one of the proteins that bind and probably mediate the attachment of the 5S RNA into the large ribosomal subunit, where it forms part of the central protuberance. In the 70S ribosome it contacts protein S13 of the 30S subunit (bridge B1b), connecting the 2 subunits; this bridge is implicated in subunit movement. Contacts the P site tRNA; the 5S rRNA and some of its associated proteins might help stabilize positioning of ribosome-bound tRNAs. This chain is Large ribosomal subunit protein uL5, found in Clostridium tetani (strain Massachusetts / E88).